Reading from the N-terminus, the 398-residue chain is Phosphomevalonate dehydratase large subunit (398 aa).

The (R)-5-phosphomevalonate site is built by Gly48, Val49, Ser50, Asn76, and Pro77. Cys116 serves as a coordination point for [4Fe-4S] cluster. Glu136 and Ser137 together coordinate (R)-5-phosphomevalonate. [4Fe-4S] cluster-binding residues include Cys287 and Cys342. A (R)-5-phosphomevalonate-binding site is contributed by Lys361.

The protein belongs to the AcnX type II large subunit family. Heterodimer composed of a large subunit (PMDh-L) and a small subunit (PMDh-S). It depends on [4Fe-4S] cluster as a cofactor.

The enzyme catalyses (R)-5-phosphomevalonate = (2E)-3-methyl-5-phosphooxypent-2-enoate + H2O. Its pathway is isoprenoid biosynthesis; isopentenyl diphosphate biosynthesis via mevalonate pathway. Functionally, component of a hydro-lyase that catalyzes the dehydration of mevalonate 5-phosphate (MVA5P) to form trans-anhydromevalonate 5-phosphate (tAHMP). Involved in the archaeal mevalonate (MVA) pathway, which provides fundamental precursors for isoprenoid biosynthesis, such as isopentenyl diphosphate (IPP) and dimethylallyl diphosphate (DMAPP). This chain is Phosphomevalonate dehydratase large subunit, found in Methanosarcina mazei (strain ATCC BAA-159 / DSM 3647 / Goe1 / Go1 / JCM 11833 / OCM 88) (Methanosarcina frisia).